We begin with the raw amino-acid sequence, 350 residues long: MTIPDKQLAAVFHTHGGPENVKFEEVPVAEPGQDEVLVNIKYTGVCHTDLHALQGDWPLPAKMPLIGGHEGAGVVVKVGAGVTRLKIGDRVGVKWMNSSCGNCEYCMKAEETICPHIQLSGYTVDGTFQHYCIANATHATIIPESVPLEVAAPIMCAGITCYRALKESKVGPGEWICIPGAGGGLGHLAVQYAKAMAMRVVAIDTGDDKAELVKSFGAEVFLDFKKEADMIEAVKAATNGGAHGTLVLSTSPKSYEQAAGFARPGSTMVTVSMPAGAKLGADIFWLTVKMLKICGSHVGNRIDSIEALEYVSRGLVKPYYKVQPFSTLPDVYRLMHENKIAGRIVLDLSK.

Cysteine 46 lines the Zn(2+) pocket. NAD(+) is bound by residues histidine 47, threonine 48, and histidine 51. The Zn(2+) site is built by histidine 69, cysteine 100, cysteine 103, cysteine 106, cysteine 114, and cysteine 156. Glycine 183, glycine 184, leucine 185, and aspartate 204 together coordinate NAD(+). The residue at position 205 (threonine 205) is a Phosphothreonine. Lysine 209 and phenylalanine 224 together coordinate NAD(+). Threonine 250 carries the phosphothreonine modification. Valine 271, methionine 273, serine 296, valine 298, and arginine 343 together coordinate NAD(+).

It belongs to the zinc-containing alcohol dehydrogenase family. As to quaternary structure, homotetramer. The cofactor is Zn(2+).

It is found in the cytoplasm. It catalyses the reaction a primary alcohol + NAD(+) = an aldehyde + NADH + H(+). The catalysed reaction is a secondary alcohol + NAD(+) = a ketone + NADH + H(+). The enzyme catalyses ethanol + NAD(+) = acetaldehyde + NADH + H(+). Reduces acetaldehyde to ethanol during the fermentation of glucose. This Schizosaccharomyces pombe (strain 972 / ATCC 24843) (Fission yeast) protein is Alcohol dehydrogenase (adh1).